The primary structure comprises 677 residues: DNA ligase (677 aa).

NAD(+) is bound by residues 34–38, 83–84, and Glu115; these read DLAFD and SL. The N6-AMP-lysine intermediate role is filled by Lys117. 4 residues coordinate NAD(+): Arg138, Glu180, Lys297, and Lys321. The Zn(2+) site is built by Cys416, Cys419, Cys434, and Cys439. A BRCT domain is found at 596-677; that stretch reads KKTSQLAGLT…LIKMLETEQA (82 aa).

Belongs to the NAD-dependent DNA ligase family. LigA subfamily. Mg(2+) is required as a cofactor. It depends on Mn(2+) as a cofactor.

It catalyses the reaction NAD(+) + (deoxyribonucleotide)n-3'-hydroxyl + 5'-phospho-(deoxyribonucleotide)m = (deoxyribonucleotide)n+m + AMP + beta-nicotinamide D-nucleotide.. In terms of biological role, DNA ligase that catalyzes the formation of phosphodiester linkages between 5'-phosphoryl and 3'-hydroxyl groups in double-stranded DNA using NAD as a coenzyme and as the energy source for the reaction. It is essential for DNA replication and repair of damaged DNA. The polypeptide is DNA ligase (Acidobacterium capsulatum (strain ATCC 51196 / DSM 11244 / BCRC 80197 / JCM 7670 / NBRC 15755 / NCIMB 13165 / 161)).